A 266-amino-acid chain; its full sequence is Beta-lactamase OXA-10 (266 aa).

The signal sequence occupies residues 1 to 19 (MKTFAAYVIIACLSSTALA). Cys-44 and Cys-51 form a disulfide bridge. The active-site Acyl-ester intermediate is Ser-67. Lys-70 carries the N6-carboxylysine modification. Ser-115, Thr-206, Phe-208, and Arg-250 together coordinate a beta-lactam.

It belongs to the class-D beta-lactamase family. In terms of assembly, dimer.

It localises to the periplasm. It catalyses the reaction a beta-lactam + H2O = a substituted beta-amino acid. With respect to regulation, activated, with respect to most beta-lactam substrates, in the presence of 0.05 M sodium bicarbonate. Class D beta-lactamase which confers resistance to the beta-lactam antibiotics, including penicillin, carbenicillin and oxacillin, and also some cephalosporins. Confers weak resistance to some carbapenems, in E.coli strain C600Z1. Acts via hydrolysis of the beta-lactam ring. Has penicillin- and cephalosporin-hydrolyzing activities. This Pseudomonas aeruginosa protein is Beta-lactamase OXA-10.